Consider the following 183-residue polypeptide: Transmembrane protein 52B (183 aa).

The signal sequence occupies residues 1 to 24 (MGVRVHVVAASALLYFILLSGTRC). A helical transmembrane segment spans residues 40-60 (VHLWYIWLLVVIGALLLLCGL). Residues 158-183 (DLPPVPEEKQLPPTEKESTRIVDSWN) form a disordered region. A compositionally biased stretch (basic and acidic residues) spans 163-177 (PEEKQLPPTEKESTR).

The protein localises to the membrane. This chain is Transmembrane protein 52B (TMEM52B), found in Homo sapiens (Human).